Here is a 351-residue protein sequence, read N- to C-terminus: Lipoyl synthase, mitochondrial (351 aa).

Positions 84, 89, 95, 115, 119, 122, and 330 each coordinate [4Fe-4S] cluster. The Radical SAM core domain occupies 100–319 (DKSKATATIM…QKRAMDMGFL (220 aa)).

The protein belongs to the radical SAM superfamily. Lipoyl synthase family. Requires [4Fe-4S] cluster as cofactor.

The protein resides in the mitochondrion. It carries out the reaction [[Fe-S] cluster scaffold protein carrying a second [4Fe-4S](2+) cluster] + N(6)-octanoyl-L-lysyl-[protein] + 2 oxidized [2Fe-2S]-[ferredoxin] + 2 S-adenosyl-L-methionine + 4 H(+) = [[Fe-S] cluster scaffold protein] + N(6)-[(R)-dihydrolipoyl]-L-lysyl-[protein] + 4 Fe(3+) + 2 hydrogen sulfide + 2 5'-deoxyadenosine + 2 L-methionine + 2 reduced [2Fe-2S]-[ferredoxin]. The protein operates within protein modification; protein lipoylation via endogenous pathway; protein N(6)-(lipoyl)lysine from octanoyl-[acyl-carrier-protein]: step 2/2. Functionally, catalyzes the radical-mediated insertion of two sulfur atoms into the C-6 and C-8 positions of the octanoyl moiety bound to the lipoyl domains of lipoate-dependent enzymes, thereby converting the octanoylated domains into lipoylated derivatives. This Yarrowia lipolytica (strain CLIB 122 / E 150) (Yeast) protein is Lipoyl synthase, mitochondrial.